We begin with the raw amino-acid sequence, 197 residues long: Probable nicotinate-nucleotide adenylyltransferase (197 aa).

It belongs to the NadD family.

The catalysed reaction is nicotinate beta-D-ribonucleotide + ATP + H(+) = deamido-NAD(+) + diphosphate. It functions in the pathway cofactor biosynthesis; NAD(+) biosynthesis; deamido-NAD(+) from nicotinate D-ribonucleotide: step 1/1. Catalyzes the reversible adenylation of nicotinate mononucleotide (NaMN) to nicotinic acid adenine dinucleotide (NaAD). The sequence is that of Probable nicotinate-nucleotide adenylyltransferase from Chlorobium phaeobacteroides (strain DSM 266 / SMG 266 / 2430).